A 78-amino-acid chain; its full sequence is ATP synthase subunit c (78 aa).

Helical transmembrane passes span 16 to 36 (LATLGMIGSALGVGNIFASFL) and 57 to 77 (MALAEALGIFSVLIAILILFV).

This sequence belongs to the ATPase C chain family. As to quaternary structure, F-type ATPases have 2 components, F(1) - the catalytic core - and F(0) - the membrane proton channel. F(1) has five subunits: alpha(3), beta(3), gamma(1), delta(1), epsilon(1). F(0) has three main subunits: a(1), b(2) and c(10-14). The alpha and beta chains form an alternating ring which encloses part of the gamma chain. F(1) is attached to F(0) by a central stalk formed by the gamma and epsilon chains, while a peripheral stalk is formed by the delta and b chains.

It localises to the cell inner membrane. In terms of biological role, f(1)F(0) ATP synthase produces ATP from ADP in the presence of a proton or sodium gradient. F-type ATPases consist of two structural domains, F(1) containing the extramembraneous catalytic core and F(0) containing the membrane proton channel, linked together by a central stalk and a peripheral stalk. During catalysis, ATP synthesis in the catalytic domain of F(1) is coupled via a rotary mechanism of the central stalk subunits to proton translocation. Its function is as follows. Key component of the F(0) channel; it plays a direct role in translocation across the membrane. A homomeric c-ring of between 10-14 subunits forms the central stalk rotor element with the F(1) delta and epsilon subunits. The sequence is that of ATP synthase subunit c from Hyphomonas neptunium (strain ATCC 15444).